The chain runs to 183 residues: NADH-quinone oxidoreductase subunit B 2 (183 aa).

4 residues coordinate [4Fe-4S] cluster: C47, C48, C113, and C142.

Belongs to the complex I 20 kDa subunit family. In terms of assembly, NDH-1 is composed of 14 different subunits. Subunits NuoB, C, D, E, F, and G constitute the peripheral sector of the complex. It depends on [4Fe-4S] cluster as a cofactor.

Its subcellular location is the cell inner membrane. It catalyses the reaction a quinone + NADH + 5 H(+)(in) = a quinol + NAD(+) + 4 H(+)(out). Functionally, NDH-1 shuttles electrons from NADH, via FMN and iron-sulfur (Fe-S) centers, to quinones in the respiratory chain. The immediate electron acceptor for the enzyme in this species is believed to be ubiquinone. Couples the redox reaction to proton translocation (for every two electrons transferred, four hydrogen ions are translocated across the cytoplasmic membrane), and thus conserves the redox energy in a proton gradient. The protein is NADH-quinone oxidoreductase subunit B 2 of Anaeromyxobacter sp. (strain Fw109-5).